The primary structure comprises 33 residues: Sucrose-6-phosphate hydrolase (33 aa).

Residue 15-18 (PLQE) coordinates substrate. The active site involves Glu18.

This sequence belongs to the glycosyl hydrolase 32 family.

It catalyses the reaction Hydrolysis of terminal non-reducing beta-D-fructofuranoside residues in beta-D-fructofuranosides.. It participates in glycan biosynthesis; sucrose metabolism. The chain is Sucrose-6-phosphate hydrolase from Fusobacterium mortiferum.